The following is a 249-amino-acid chain: Leucyl/phenylalanyl-tRNA--protein transferase (249 aa).

Residues 1-21 form a disordered region; sequence MSRTLPHLLSSDPASPFPPAE.

It belongs to the L/F-transferase family.

It is found in the cytoplasm. The catalysed reaction is N-terminal L-lysyl-[protein] + L-leucyl-tRNA(Leu) = N-terminal L-leucyl-L-lysyl-[protein] + tRNA(Leu) + H(+). It catalyses the reaction N-terminal L-arginyl-[protein] + L-leucyl-tRNA(Leu) = N-terminal L-leucyl-L-arginyl-[protein] + tRNA(Leu) + H(+). It carries out the reaction L-phenylalanyl-tRNA(Phe) + an N-terminal L-alpha-aminoacyl-[protein] = an N-terminal L-phenylalanyl-L-alpha-aminoacyl-[protein] + tRNA(Phe). Functions in the N-end rule pathway of protein degradation where it conjugates Leu, Phe and, less efficiently, Met from aminoacyl-tRNAs to the N-termini of proteins containing an N-terminal arginine or lysine. This chain is Leucyl/phenylalanyl-tRNA--protein transferase, found in Xanthomonas campestris pv. campestris (strain 8004).